Consider the following 118-residue polypeptide: BLOC-1-related complex subunit 8 (118 aa).

Polar residues predominate over residues 98–107 (KEQISNSQGR). The tract at residues 98 to 118 (KEQISNSQGRSPHVSAPSASS) is disordered.

Belongs to the BORCS8 family.

It is found in the lysosome membrane. As part of a BORC-like complex, it may play a role in the movement and localization of lysosomes at the cell periphery. Associated with the cytosolic face of lysosomes, this complex may couple lysosomes to microtubule plus-end-directed kinesin motors, driving lysosome movement toward the cell periphery. The polypeptide is BLOC-1-related complex subunit 8 (Tetraodon nigroviridis (Spotted green pufferfish)).